The primary structure comprises 359 residues: Olfactory receptor 8S1 (359 aa).

Residues 1–25 (MALGNHSTITEFLLLGLSADPNIRA) lie on the Extracellular side of the membrane. A glycan (N-linked (GlcNAc...) asparagine) is linked at N5. Residues 26 to 46 (LLFVLFLGIYLLTIMENLMLL) traverse the membrane as a helical segment. The Cytoplasmic segment spans residues 47–54 (LMIRADSC). The helical transmembrane segment at 55–75 (LHKPMYFFLSHLSFVDLCFSS) threads the bilayer. Topologically, residues 76-99 (VIVPKMLENLLSQRKTISVEGCLA) are extracellular. C97 and C189 form a disulfide bridge. The helical transmembrane segment at 100–120 (QVFFVFVTAGTEACLLSGMAY) threads the bilayer. Residues 121-139 (DRHAAICRPLLYGQIMGKQ) lie on the Cytoplasmic side of the membrane. A helical membrane pass occupies residues 140–160 (LYMHLVWGSWGLGFLDALINV). The Extracellular segment spans residues 161-197 (LLAVNMVFCEAKIIHHYSYEMPSLLPLSCSDISRSLI). Residues 198 to 217 (ALLCSTLLHGLGNFLLVFLS) form a helical membrane-spanning segment. The Cytoplasmic segment spans residues 218–237 (YTRIISTILSISSTSGRSKA). A helical membrane pass occupies residues 238-258 (FSTCSAHLTAVTLYYGSGLLR). Topologically, residues 259–269 (HLMPNSGSPIE) are extracellular. Residues 270 to 290 (LIFSVQYTVVTPMLNSLIYSL) form a helical membrane-spanning segment. The Cytoplasmic segment spans residues 291–359 (KNKEVKGERS…ALRAAPTALP (69 aa)). Positions 301–338 (LRDSSHLPQLHKGQARWKRPAFTEGRREPGHPELSIPV) are disordered.

Belongs to the G-protein coupled receptor 1 family.

The protein resides in the cell membrane. Functionally, odorant receptor. The polypeptide is Olfactory receptor 8S1 (OR8S1) (Homo sapiens (Human)).